The chain runs to 417 residues: Ankyrin repeat and SAM domain-containing protein 4B (417 aa).

Positions 1–252 (MSTRYHQAAS…SGDFKEKLQL (252 aa)) are mediates localization to microvilli. ANK repeat units lie at residues 31-60 (DGMT…DPDR), 64-93 (WGNT…NIFA), and 97-126 (DLQT…AQNI). A coiled-coil region spans residues 130-164 (KKVTRLKEQAQKNARRQIKECERLQEKHQNKMAHT). Residues 151 to 195 (ERLQEKHQNKMAHTYSKEESGTLSSSKGTFSRSSPSNASAPGTFG) form a disordered region. A compositionally biased stretch (polar residues) spans 171–190 (GTLSSSKGTFSRSSPSNASA). Residues 253 to 346 (SAEEDGSVHH…EWEEDVVDAT (94 aa)) form a mediates interaction with MYO7B region. S283 bears the Phosphoserine mark. The interval 305 to 330 (RQGASEADEGAADEEGEENGLKDDLP) is disordered. The span at 310 to 322 (EADEGAADEEGEE) shows a compositional bias: acidic residues. The SAM domain maps to 351-403 (FLLSQHLEEFLPIFKREQIDLEALLLCSDEDLQSIQMQLGPRKKVLNAINRRK). The short motif at 415–417 (TSL) is the PDZ-binding; mediates interaction with USH1C element.

As to quaternary structure, part of the IMAC/intermicrovillar adhesion complex/intermicrovillar tip-link complex composed of ANKS4B, MYO7B, USH1C, CDHR2 and CDHR5. Interacts with USH1C; the interaction is direct and is required for ANKS4B localization to the tip of microvilli. Interacts with MYO7B; the interaction is direct. May interact with HSPA5. As to expression, expressed in kidney and small intestine.

It localises to the cell projection. It is found in the microvillus. As part of the intermicrovillar adhesion complex/IMAC plays a role in epithelial brush border differentiation, controlling microvilli organization and length. Plays a role in assembly of the complex. May play a role in cellular response to endoplasmic reticulum stress. This chain is Ankyrin repeat and SAM domain-containing protein 4B, found in Homo sapiens (Human).